The following is a 328-amino-acid chain: Phosphate acyltransferase (328 aa).

It belongs to the PlsX family. Homodimer. Probably interacts with PlsY.

The protein localises to the cytoplasm. The catalysed reaction is a fatty acyl-[ACP] + phosphate = an acyl phosphate + holo-[ACP]. The protein operates within lipid metabolism; phospholipid metabolism. Catalyzes the reversible formation of acyl-phosphate (acyl-PO(4)) from acyl-[acyl-carrier-protein] (acyl-ACP). This enzyme utilizes acyl-ACP as fatty acyl donor, but not acyl-CoA. The protein is Phosphate acyltransferase of Campylobacter jejuni subsp. jejuni serotype O:2 (strain ATCC 700819 / NCTC 11168).